We begin with the raw amino-acid sequence, 527 residues long: Eukaryotic translation initiation factor 4B1 (527 aa).

2 disordered regions span residues 1-370 (MAKP…REVV) and 453-527 (FGQR…RQGW). Composition is skewed to low complexity over residues 35–45 (AAAGGAASFPS) and 74–85 (GAAGAPRRVAPA). Composition is skewed to basic and acidic residues over residues 102–155 (PRER…DNWG) and 181–194 (RSDD…DKKP). Residues 196–203 (PSRYPSLG) carry the Nuclear localization signal motif. The segment covering 203 to 232 (GTGGGFRESSGGGFRESSGGGFRESSGGGF) has biased composition (gly residues). Over residues 293–317 (KPREEVLAEKGLDWRKMEGEIEKKT) the composition is skewed to basic and acidic residues. The span at 319–336 (RPTSSHSSRPNSAHSSRP) shows a compositional bias: low complexity. Basic and acidic residues-rich tracts occupy residues 472 to 485 (EEPH…DRPR) and 496 to 510 (PVEE…RERG). The segment covering 518–527 (SDRSSTRQGW) has biased composition (low complexity).

This sequence belongs to the eIF-4 subunit B family. In terms of assembly, homodimer. Nonspherical monomer. mRNA-discriminating component of initiation complexes. In terms of processing, phosphorylated.

It localises to the nucleus. In terms of biological role, promotes the eIF4F and eIF4A RNA-dependent ATP-hydrolysis activity with different efficiency depending on mRNAs, thus providing mRNA discrimination during initiation of translation. This chain is Eukaryotic translation initiation factor 4B1, found in Triticum aestivum (Wheat).